Consider the following 273-residue polypeptide: ATP synthase subunit a (273 aa).

A run of 7 helical transmembrane segments spans residues 41–61 (ILNI…LLIF), 101–121 (LIAP…LMDL), 122–142 (LAVD…ALRV), 143–163 (VPSA…ILII), 183–203 (PFNH…SLLS), 221–241 (LVFI…ISVP), and 247–267 (IIVI…YIAM).

It belongs to the ATPase A chain family. F-type ATPases have 2 components, CF(1) - the catalytic core - and CF(0) - the membrane proton channel. CF(1) has five subunits: alpha(3), beta(3), gamma(1), delta(1), epsilon(1). CF(0) has three main subunits: a(1), b(2) and c(9-12). The alpha and beta chains form an alternating ring which encloses part of the gamma chain. CF(1) is attached to CF(0) by a central stalk formed by the gamma and epsilon chains, while a peripheral stalk is formed by the delta and b chains.

It localises to the cell membrane. Key component of the proton channel; it plays a direct role in the translocation of protons across the membrane. The protein is ATP synthase subunit a of Baumannia cicadellinicola subsp. Homalodisca coagulata.